A 64-amino-acid polypeptide reads, in one-letter code: Large ribosomal subunit protein eL37 (64 aa).

Residues cysteine 20, cysteine 23, cysteine 35, and cysteine 38 each coordinate Zn(2+). Residues 20–38 (CRRCGRRAYHVRKKACAAC) form a C4-type zinc finger.

Belongs to the eukaryotic ribosomal protein eL37 family. The cofactor is Zn(2+).

In terms of biological role, binds to the 23S rRNA. This Methanococcus vannielii (strain ATCC 35089 / DSM 1224 / JCM 13029 / OCM 148 / SB) protein is Large ribosomal subunit protein eL37.